The sequence spans 120 residues: Flagellar protein FliT (120 aa).

The tract at residues 1-50 is required for homodimerization; the sequence is MNDSSLSLKKWHALSALSNTMLSLAQSGKWDELIEQEVAYVSLVEKISIT. Positions 59-97 are fliD binding; sequence IQDQAMVMLNNVLQNEMTLKTLLQERMDELHGLMAQTGK.

Belongs to the FliT family. In terms of assembly, homodimer. Interacts with FliD and FlhC.

Its subcellular location is the cytoplasm. It is found in the cytosol. Its function is as follows. Dual-function protein that regulates the transcription of class 2 flagellar operons and that also acts as an export chaperone for the filament-capping protein FliD. As a transcriptional regulator, acts as an anti-FlhDC factor; it directly binds FlhC, thus inhibiting the binding of the FlhC/FlhD complex to class 2 promoters, resulting in decreased expression of class 2 flagellar operons. As a chaperone, effects FliD transition to the membrane by preventing its premature polymerization, and by directing it to the export apparatus. The sequence is that of Flagellar protein FliT from Enterobacter sp. (strain 638).